Here is a 104-residue protein sequence, read N- to C-terminus: DNA-directed RNA polymerase subunit omega (104 aa).

The protein belongs to the RNA polymerase subunit omega family. As to quaternary structure, the RNAP catalytic core consists of 2 alpha, 1 beta, 1 beta' and 1 omega subunit. When a sigma factor is associated with the core the holoenzyme is formed, which can initiate transcription.

The catalysed reaction is RNA(n) + a ribonucleoside 5'-triphosphate = RNA(n+1) + diphosphate. Its function is as follows. Promotes RNA polymerase assembly. Latches the N- and C-terminal regions of the beta' subunit thereby facilitating its interaction with the beta and alpha subunits. The polypeptide is DNA-directed RNA polymerase subunit omega (Streptococcus agalactiae serotype Ia (strain ATCC 27591 / A909 / CDC SS700)).